We begin with the raw amino-acid sequence, 288 residues long: Pantothenate synthetase (288 aa).

An ATP-binding site is contributed by 30-37 (MGNLHNGH). The active-site Proton donor is the histidine 37. Residue glutamine 61 participates in (R)-pantoate binding. Position 61 (glutamine 61) interacts with beta-alanine. Residue 149–152 (GQKD) participates in ATP binding. Glutamine 155 contacts (R)-pantoate. Residues valine 178 and 186 to 189 (LSSR) contribute to the ATP site.

It belongs to the pantothenate synthetase family. In terms of assembly, homodimer.

It is found in the cytoplasm. It carries out the reaction (R)-pantoate + beta-alanine + ATP = (R)-pantothenate + AMP + diphosphate + H(+). Its pathway is cofactor biosynthesis; (R)-pantothenate biosynthesis; (R)-pantothenate from (R)-pantoate and beta-alanine: step 1/1. Catalyzes the condensation of pantoate with beta-alanine in an ATP-dependent reaction via a pantoyl-adenylate intermediate. The polypeptide is Pantothenate synthetase (Tolumonas auensis (strain DSM 9187 / NBRC 110442 / TA 4)).